Consider the following 278-residue polypeptide: MEYHSHTVVTERKVTLLEQGQASDLTDYVANEVRVALVYNGISHTVMLASPENLEEFAIGFTLSERIVSHVNEIKGVDLEFTPEGVLIQVEITQRCFMALKQLRRNMAGRTGCGLCGVAQLEEAVKPVIRVDSDARFNIDHLQFALEQVKDNQHHFKLTGATHAAMGLDLEGQIIAAYEDIGRHIALDKLIGGCSMRHAKRPVAVLLTSRASFEMVQKAASANIQILFAMSAVTSLALELAEKSNITLIGFCRNGRATLYTHGYRLLGLNRASLAKAI.

The Cysteine persulfide intermediate role is filled by Cys-113. Position 251-256 (251-256 (FCRNGR)) interacts with Mo-bis(molybdopterin guanine dinucleotide).

This sequence belongs to the FdhD family.

It localises to the cytoplasm. Functionally, required for formate dehydrogenase (FDH) activity. Acts as a sulfur carrier protein that transfers sulfur from IscS to the molybdenum cofactor prior to its insertion into FDH. The protein is Sulfur carrier protein FdhD of Shewanella oneidensis (strain ATCC 700550 / JCM 31522 / CIP 106686 / LMG 19005 / NCIMB 14063 / MR-1).